A 301-amino-acid polypeptide reads, in one-letter code: 5'-3' exonuclease (301 aa).

The 83-residue stretch at 182–264 (GYADLALLRG…RVAADVPLPD (83 aa)) folds into the 5'-3' exonuclease domain.

Functionally, 5'-3' exonuclease acting preferentially on double-stranded DNA. This Streptomyces coelicolor (strain ATCC BAA-471 / A3(2) / M145) protein is 5'-3' exonuclease.